A 317-amino-acid chain; its full sequence is Olfactory receptor 5AP2 (317 aa).

Residues 1-32 (MVRSGKGIQNKNATEVTEFILLGLSDNPDLQG) are Extracellular-facing. N-linked (GlcNAc...) asparagine glycosylation occurs at Asn12. A helical transmembrane segment spans residues 33 to 53 (VLFALFLIIYTMTLVGNLGMM). Residues 54 to 61 (ALIKIDRS) are Cytoplasmic-facing. The helical transmembrane segment at 62 to 82 (LHTPMYFFLSSLSFVDASYSS) threads the bilayer. At 83 to 106 (SVTPKMLVNLMAEDKSISFNGCAT) the chain is on the extracellular side. Cys104 and Cys196 are oxidised to a cystine. The chain crosses the membrane as a helical span at residues 107–127 (QFFFFGSFLGTECFLLAMMAY). The Cytoplasmic portion of the chain corresponds to 128–140 (DRYAAIWNPLLYP). Residues 141 to 161 (VLMSGRICFMLVSTSFLAGFG) form a helical membrane-spanning segment. Residues 162–203 (NAAIHTGMTFRLSFCGSNKINHFYCDTPPLLKLSCSDTHING) lie on the Extracellular side of the membrane. The chain crosses the membrane as a helical span at residues 204 to 224 (IVIMAFSSFNVISCVLIVLIS). Residues 225–244 (YLCILIAILKMPSAEGRHKA) lie on the Cytoplasmic side of the membrane. Residues 245-265 (FSTCASHLMAVTIFFGTILFM) traverse the membrane as a helical segment. Over 266–278 (YLRPTSSYSMEQD) the chain is Extracellular. The chain crosses the membrane as a helical span at residues 279–299 (KVVSVFYTVVIPMLNPLIYSL). The Cytoplasmic segment spans residues 300-317 (KNKDVKKAVKKILHNYVV).

The protein belongs to the G-protein coupled receptor 1 family.

It is found in the cell membrane. In terms of biological role, odorant receptor. This Mus musculus (Mouse) protein is Olfactory receptor 5AP2.